The sequence spans 505 residues: Glycerol kinase (505 aa).

An ADP-binding site is contributed by Thr13. 3 residues coordinate ATP: Thr13, Thr14, and Ser15. Thr13 contacts sn-glycerol 3-phosphate. Arg17 serves as a coordination point for ADP. Residues Arg83, Glu84, Tyr135, and Asp247 each contribute to the sn-glycerol 3-phosphate site. Residues Arg83, Glu84, Tyr135, Asp247, and Gln248 each coordinate glycerol. ADP is bound by residues Thr269 and Gly313. ATP is bound by residues Thr269, Gly313, Gln317, and Gly414. The ADP site is built by Gly414 and Asn418.

It belongs to the FGGY kinase family.

It carries out the reaction glycerol + ATP = sn-glycerol 3-phosphate + ADP + H(+). It participates in polyol metabolism; glycerol degradation via glycerol kinase pathway; sn-glycerol 3-phosphate from glycerol: step 1/1. With respect to regulation, inhibited by fructose 1,6-bisphosphate (FBP). Functionally, key enzyme in the regulation of glycerol uptake and metabolism. Catalyzes the phosphorylation of glycerol to yield sn-glycerol 3-phosphate. This is Glycerol kinase from Clavibacter michiganensis subsp. michiganensis (strain NCPPB 382).